Here is a 351-residue protein sequence, read N- to C-terminus: D-glucoside 3-dehydrogenase (351 aa).

The protein belongs to the Gfo/Idh/MocA family.

The enzyme catalyses a D-glucoside + NAD(+) = a 3-dehydro-D-glucoside + NADH + H(+). Catalyzes the NADH-dependent reduction of the oxo group at C3 of 3-dehydro-D-glucosides leading to D-glucosides. Probably functions in a metabolic pathway that transforms D-gulosides to D-glucosides. Can use 3-dehydro-D-glucose, methyl alpha-3-dehydro-D-glucoside and methyl beta-3-dehydro-D-glucoside as substrates in vitro. However, the actual specific physiological substrates for this metabolic pathway are unknown. To a lesser extent, is also able to catalyze the reverse reactions, i.e. the NAD(+)-dependent oxidation of the hydroxyl group at C3 of D-glucosides leading to 3-dehydro-D-glucosides. Cannot act on UDP-glucose, UDP-N-acetyl-D-glucosamine, D-glucosamine, N-acetyl-D-glucosamine, or UDP-D-galactose. The polypeptide is D-glucoside 3-dehydrogenase (ycjS) (Escherichia coli (strain K12)).